The primary structure comprises 184 residues: ATP synthase subunit delta (184 aa).

It belongs to the ATPase delta chain family. As to quaternary structure, F-type ATPases have 2 components, F(1) - the catalytic core - and F(0) - the membrane proton channel. F(1) has five subunits: alpha(3), beta(3), gamma(1), delta(1), epsilon(1). F(0) has three main subunits: a(1), b(2) and c(10-14). The alpha and beta chains form an alternating ring which encloses part of the gamma chain. F(1) is attached to F(0) by a central stalk formed by the gamma and epsilon chains, while a peripheral stalk is formed by the delta and b chains.

Its subcellular location is the cell membrane. F(1)F(0) ATP synthase produces ATP from ADP in the presence of a proton or sodium gradient. F-type ATPases consist of two structural domains, F(1) containing the extramembraneous catalytic core and F(0) containing the membrane proton channel, linked together by a central stalk and a peripheral stalk. During catalysis, ATP synthesis in the catalytic domain of F(1) is coupled via a rotary mechanism of the central stalk subunits to proton translocation. Its function is as follows. This protein is part of the stalk that links CF(0) to CF(1). It either transmits conformational changes from CF(0) to CF(1) or is implicated in proton conduction. This is ATP synthase subunit delta from Amoebophilus asiaticus (strain 5a2).